The primary structure comprises 551 residues: Crossover junction endonuclease EME1B (551 aa).

Disordered regions lie at residues 1–55 (MNDH…PIFV) and 187–239 (TTLP…RLEK). A compositionally biased stretch (polar residues) spans 37-51 (SDPTPQKQPPESSFT). Over residues 202–239 (SKEDKTSAMEEKKLRKEQERLEKAASKAEEAERKRLEK) the composition is skewed to basic and acidic residues. The stretch at 203-253 (KEDKTSAMEEKKLRKEQERLEKAASKAEEAERKRLEKEKKKWEKGKLALKS) forms a coiled coil. Residues 287–484 (NPIERSIVWT…PSMKSLLKVY (198 aa)) form the ERCC4 domain.

This sequence belongs to the EME1/MMS4 family. In terms of assembly, forms a heterodimer with MUS81. It depends on Mg(2+) as a cofactor. The cofactor is Ca(2+).

It localises to the nucleus. Interacts with MUS81 to form a DNA structure-specific endonuclease with substrate preference for branched DNA structures with a 5'-end at the branch nick. Typical substrates include 3'-flap structures, D-loops, replication forks, nicked Holliday junctions and also intact Holliday junctions with a reduced efficiency. May be required in mitosis for the processing of stalled or collapsed replication fork intermediates. Plays a role in DNA repair and in genotoxic stress-induced homologous recombination (HR) in somatic cells. Mediates a subset of meiotic recombination events that are insensitive to crossover interference. The protein is Crossover junction endonuclease EME1B (EME1B) of Arabidopsis thaliana (Mouse-ear cress).